Reading from the N-terminus, the 413-residue chain is Endoplasmic reticulum resident protein 44.2 (413 aa).

The first 21 residues, 1-21 (MNLASVLLLLAACHLSVSVNG), serve as a signal peptide directing secretion. In terms of domain architecture, Thioredoxin spans 22–136 (QEHKEAIELS…LTNFVKFQLS (115 aa)). An intrachain disulfide couples Cys184 to Cys233. N-linked (GlcNAc...) asparagine glycosylation is present at Asn264. The disordered stretch occupies residues 367–413 (KAARGITDDHEAQAPSTRPIDTTPPPSVFKELKPSDKRYSILQKSEL). Residues 396–413 (KELKPSDKRYSILQKSEL) show a composition bias toward basic and acidic residues. The Prevents secretion from ER signature appears at 410–413 (KSEL).

The protein localises to the endoplasmic reticulum lumen. In Caenorhabditis elegans, this protein is Endoplasmic reticulum resident protein 44.2.